Reading from the N-terminus, the 126-residue chain is Thioredoxin domain-containing protein, mitochondrial (126 aa).

The Thioredoxin domain maps to 14–120; that stretch reads SQKIATNTSF…ILEFLNHIET (107 aa).

The protein belongs to the thioredoxin family.

It is found in the mitochondrion. This Dictyostelium discoideum (Social amoeba) protein is Thioredoxin domain-containing protein, mitochondrial.